The following is a 142-amino-acid chain: Putative pre-16S rRNA nuclease (142 aa).

It belongs to the YqgF nuclease family.

It localises to the cytoplasm. In terms of biological role, could be a nuclease involved in processing of the 5'-end of pre-16S rRNA. This is Putative pre-16S rRNA nuclease from Ruminiclostridium cellulolyticum (strain ATCC 35319 / DSM 5812 / JCM 6584 / H10) (Clostridium cellulolyticum).